A 515-amino-acid polypeptide reads, in one-letter code: Maturase K (515 aa).

The protein belongs to the intron maturase 2 family. MatK subfamily.

It localises to the plastid. The protein resides in the chloroplast. In terms of biological role, usually encoded in the trnK tRNA gene intron. Probably assists in splicing its own and other chloroplast group II introns. The chain is Maturase K from Pseudotsuga menziesii (Douglas-fir).